The sequence spans 130 residues: Small ribosomal subunit protein uS9 (130 aa).

The segment at 109–130 (RAKERKKYGLYGARRSPQFTKR) is disordered.

This sequence belongs to the universal ribosomal protein uS9 family.

This chain is Small ribosomal subunit protein uS9, found in Malacoplasma penetrans (strain HF-2) (Mycoplasma penetrans).